Consider the following 305-residue polypeptide: Spermatogenesis-associated protein 4 (305 aa).

Residues 49 to 155 (SRLSRSVLRW…EEVYTLLTHR (107 aa)) enclose the Calponin-homology (CH) domain.

The protein localises to the nucleus. In terms of biological role, may play a role in apoptosis regulation. This is Spermatogenesis-associated protein 4 (SPATA4) from Pan troglodytes (Chimpanzee).